Consider the following 152-residue polypeptide: Nucleoside diphosphate kinase A 2 (152 aa).

ATP-binding residues include lysine 12, phenylalanine 60, arginine 88, threonine 94, arginine 105, and asparagine 115. Histidine 118 acts as the Pros-phosphohistidine intermediate in catalysis.

This sequence belongs to the NDK family. As to quaternary structure, homohexamer. Mg(2+) is required as a cofactor. Post-translationally, the N-terminus is blocked.

It is found in the cytoplasm. Its subcellular location is the cell membrane. The protein resides in the nucleus. It catalyses the reaction a 2'-deoxyribonucleoside 5'-diphosphate + ATP = a 2'-deoxyribonucleoside 5'-triphosphate + ADP. It carries out the reaction a ribonucleoside 5'-diphosphate + ATP = a ribonucleoside 5'-triphosphate + ADP. Autophosphorylation at His-118 increases serine/threonine protein kinase activity of the enzyme. Interaction with the SET complex inhibits exonuclease activity. In terms of biological role, major role in the synthesis of nucleoside triphosphates other than ATP. Possesses nucleoside-diphosphate kinase, serine/threonine-specific protein kinase, geranyl and farnesyl pyrophosphate kinase, histidine protein kinase and 3'-5' exonuclease activities. Involved in cell proliferation, differentiation and development, signal transduction, G protein-coupled receptor endocytosis, and gene expression. Required for neural development including neural patterning and cell fate determination. In Bos taurus (Bovine), this protein is Nucleoside diphosphate kinase A 2 (NME1-2).